The chain runs to 638 residues: 1-deoxy-D-xylulose-5-phosphate synthase (638 aa).

Residues His76 and 117–119 contribute to the thiamine diphosphate site; that span reads AHS. Asp148 serves as a coordination point for Mg(2+). Residues 149–150, Asn177, Tyr287, and Glu369 contribute to the thiamine diphosphate site; that span reads GS. Residue Asn177 participates in Mg(2+) binding.

It belongs to the transketolase family. DXPS subfamily. In terms of assembly, homodimer. Mg(2+) is required as a cofactor. Requires thiamine diphosphate as cofactor.

It carries out the reaction D-glyceraldehyde 3-phosphate + pyruvate + H(+) = 1-deoxy-D-xylulose 5-phosphate + CO2. It participates in metabolic intermediate biosynthesis; 1-deoxy-D-xylulose 5-phosphate biosynthesis; 1-deoxy-D-xylulose 5-phosphate from D-glyceraldehyde 3-phosphate and pyruvate: step 1/1. Functionally, catalyzes the acyloin condensation reaction between C atoms 2 and 3 of pyruvate and glyceraldehyde 3-phosphate to yield 1-deoxy-D-xylulose-5-phosphate (DXP). The polypeptide is 1-deoxy-D-xylulose-5-phosphate synthase (Rhodopseudomonas palustris (strain BisB5)).